A 277-amino-acid chain; its full sequence is Bifunctional protein FolD (277 aa).

Residues 160–162, serine 185, and isoleucine 226 each bind NADP(+); that span reads GAS.

It belongs to the tetrahydrofolate dehydrogenase/cyclohydrolase family. As to quaternary structure, homodimer.

The catalysed reaction is (6R)-5,10-methylene-5,6,7,8-tetrahydrofolate + NADP(+) = (6R)-5,10-methenyltetrahydrofolate + NADPH. It catalyses the reaction (6R)-5,10-methenyltetrahydrofolate + H2O = (6R)-10-formyltetrahydrofolate + H(+). It functions in the pathway one-carbon metabolism; tetrahydrofolate interconversion. Its function is as follows. Catalyzes the oxidation of 5,10-methylenetetrahydrofolate to 5,10-methenyltetrahydrofolate and then the hydrolysis of 5,10-methenyltetrahydrofolate to 10-formyltetrahydrofolate. The sequence is that of Bifunctional protein FolD from Vesicomyosocius okutanii subsp. Calyptogena okutanii (strain HA).